A 349-amino-acid polypeptide reads, in one-letter code: tRNA N6-adenosine threonylcarbamoyltransferase (349 aa).

Positions 118 and 122 each coordinate Fe cation. Substrate-binding positions include 141-145 (LVSGG), Asp-174, Gly-187, and Asn-280. Fe cation is bound at residue Asp-308.

It belongs to the KAE1 / TsaD family. Requires Fe(2+) as cofactor.

It localises to the cytoplasm. The catalysed reaction is L-threonylcarbamoyladenylate + adenosine(37) in tRNA = N(6)-L-threonylcarbamoyladenosine(37) in tRNA + AMP + H(+). In terms of biological role, required for the formation of a threonylcarbamoyl group on adenosine at position 37 (t(6)A37) in tRNAs that read codons beginning with adenine. Is involved in the transfer of the threonylcarbamoyl moiety of threonylcarbamoyl-AMP (TC-AMP) to the N6 group of A37, together with TsaE and TsaB. TsaD likely plays a direct catalytic role in this reaction. This Acidovorax sp. (strain JS42) protein is tRNA N6-adenosine threonylcarbamoyltransferase.